The sequence spans 374 residues: Probable quinol oxidase subunit 2 (374 aa).

The N-terminal stretch at 1–19 (MSKFKSLLLMFGTLILLSG) is a signal peptide. A lipid anchor (N-palmitoyl cysteine) is attached at C20. C20 carries S-diacylglycerol cysteine lipidation. Helical transmembrane passes span 43-63 (SIIF…IFIF) and 82-102 (IETI…IPTV). The disordered stretch occupies residues 321–374 (MKPMILGNNDPYDNEFKKEEDHNSKEMEKISKSAKDENASKFGSKADNDHGGGH). The segment covering 334–374 (NEFKKEEDHNSKEMEKISKSAKDENASKFGSKADNDHGGGH) has biased composition (basic and acidic residues).

The protein belongs to the cytochrome c oxidase subunit 2 family.

It is found in the cell membrane. It catalyses the reaction 2 a quinol + O2 = 2 a quinone + 2 H2O. Catalyzes quinol oxidation with the concomitant reduction of oxygen to water. Subunit II transfers the electrons from a quinol to the binuclear center of the catalytic subunit I. This is Probable quinol oxidase subunit 2 (qoxA) from Staphylococcus haemolyticus (strain JCSC1435).